A 328-amino-acid chain; its full sequence is GMP reductase (328 aa).

Residue Cys-176 is the Thioimidate intermediate of the active site. Residue 205–228 coordinates NADP(+); it reads IIADGGIRTHGDIAKSIRFGASMI.

The protein belongs to the IMPDH/GMPR family. GuaC type 2 subfamily.

It carries out the reaction IMP + NH4(+) + NADP(+) = GMP + NADPH + 2 H(+). Its function is as follows. Catalyzes the irreversible NADPH-dependent deamination of GMP to IMP. It functions in the conversion of nucleobase, nucleoside and nucleotide derivatives of G to A nucleotides, and in maintaining the intracellular balance of A and G nucleotides. The protein is GMP reductase of Streptococcus pneumoniae (strain ATCC 700669 / Spain 23F-1).